The chain runs to 209 residues: MEQPRKAVVVTGFGPFGEHTVNASWIAVQELEKLGLGDSVDLHVYEIPVEYQTVQRLIPALWEKHSPQLVVHVGVSGMATTVTLEKCGHNKGYKGLDNCRFCPGSQCCVEDGPESIDSIIDMDAVCKRVTTLGLDVSVTISQDAGRYLCDFTYYTSLYQSHGRSAFVHVPPLGKPYNADQLGRALRAIIEEMLDLLEQSEGKINYCHKH.

Active-site residues include E85, C149, and H168.

This sequence belongs to the peptidase C15 family. As to quaternary structure, monomer.

Its subcellular location is the cytoplasm. It carries out the reaction Release of an N-terminal pyroglutamyl group from a polypeptide, the second amino acid generally not being Pro.. Its activity is regulated as follows. Inhibited by transition metal ions including Ni(2+), Zn(2+), and Cu(2+) and by sulfhydryl-blocking agents. Its function is as follows. Removes 5-oxoproline from various penultimate amino acid residues except L-proline. The polypeptide is Pyroglutamyl-peptidase 1 (PGPEP1) (Homo sapiens (Human)).